The chain runs to 56 residues: Ovomucoid (56 aa).

One can recognise a Kazal-like domain in the interval 6-56 (VDCSEYPKPACTLEHRPLCGSDNKTYGNKCNFCNAVVESNGTLTLSHFGKC). Intrachain disulfides connect C8–C38, C16–C35, and C24–C56. N45 carries N-linked (GlcNAc...) asparagine glycosylation.

The protein localises to the secreted. The polypeptide is Ovomucoid (Pavo cristatus (Indian peafowl)).